The sequence spans 401 residues: tRNA(Met) cytidine acetate ligase (401 aa).

ATP-binding positions include 7 to 20 (VVEY…HLYH), Gly-101, Asn-160, and 185 to 186 (RI).

The protein belongs to the TmcAL family.

It is found in the cytoplasm. It catalyses the reaction cytidine(34) in elongator tRNA(Met) + acetate + ATP = N(4)-acetylcytidine(34) in elongator tRNA(Met) + AMP + diphosphate. In terms of biological role, catalyzes the formation of N(4)-acetylcytidine (ac(4)C) at the wobble position of elongator tRNA(Met), using acetate and ATP as substrates. First activates an acetate ion to form acetyladenylate (Ac-AMP) and then transfers the acetyl group to tRNA to form ac(4)C34. This is tRNA(Met) cytidine acetate ligase from Anoxybacillus flavithermus (strain DSM 21510 / WK1).